A 35-amino-acid polypeptide reads, in one-letter code: 3-hydroxyisobutyrate dehydrogenase (35 aa).

4–33 (TPVGFIGLGNMGNPMAKNLMKHGYPLIIYD) provides a ligand contact to NAD(+). Lys-24 is modified (N6-acetyllysine; alternate). Position 24 is an N6-succinyllysine; alternate (Lys-24).

The protein belongs to the HIBADH-related family. 3-hydroxyisobutyrate dehydrogenase subfamily. As to quaternary structure, homodimer.

The protein localises to the mitochondrion. It catalyses the reaction 3-hydroxy-2-methylpropanoate + NAD(+) = 2-methyl-3-oxopropanoate + NADH + H(+). It participates in amino-acid degradation; L-valine degradation. The protein is 3-hydroxyisobutyrate dehydrogenase (HIBADH) of Oryctolagus cuniculus (Rabbit).